The primary structure comprises 191 residues: MSIKSDRWIRKMAEEHGMIEPFEAGQVRFNDAGERLVSYGTSSYGYDVRCAPEFKVFTNVHSVIVDPKNFDEKSFIDIIGDECIIPPNSFALARTMEYFRIPRDVLTICLGKSTYARCGIIVNVTPLEPEWEGHVTLEFSNTTNLPARIYAGEGVAQMLFFQSDADDVCETSYKDRGGKYQGQRGVTLPRT.

Residues 112–117 (KSTYAR), 136–138 (TLE), Gln157, Tyr173, and Gln183 each bind dCTP. The Proton donor/acceptor role is filled by Glu138.

The protein belongs to the dCTP deaminase family. Homotrimer.

It catalyses the reaction dCTP + H2O + H(+) = dUTP + NH4(+). The protein operates within pyrimidine metabolism; dUMP biosynthesis; dUMP from dCTP (dUTP route): step 1/2. Catalyzes the deamination of dCTP to dUTP. In Psychrobacter arcticus (strain DSM 17307 / VKM B-2377 / 273-4), this protein is dCTP deaminase.